The following is a 184-amino-acid chain: ATP synthase subunit b, chloroplastic (184 aa).

Residues 4–24 (IINLVIFSGYWPIAGNFGLNT) form a helical membrane-spanning segment.

This sequence belongs to the ATPase B chain family. F-type ATPases have 2 components, F(1) - the catalytic core - and F(0) - the membrane proton channel. F(1) has five subunits: alpha(3), beta(3), gamma(1), delta(1), epsilon(1). F(0) has four main subunits: a(1), b(1), b'(1) and c(10-14). The alpha and beta chains form an alternating ring which encloses part of the gamma chain. F(1) is attached to F(0) by a central stalk formed by the gamma and epsilon chains, while a peripheral stalk is formed by the delta, b and b' chains.

The protein resides in the plastid. It localises to the chloroplast thylakoid membrane. In terms of biological role, f(1)F(0) ATP synthase produces ATP from ADP in the presence of a proton or sodium gradient. F-type ATPases consist of two structural domains, F(1) containing the extramembraneous catalytic core and F(0) containing the membrane proton channel, linked together by a central stalk and a peripheral stalk. During catalysis, ATP synthesis in the catalytic domain of F(1) is coupled via a rotary mechanism of the central stalk subunits to proton translocation. Its function is as follows. Component of the F(0) channel, it forms part of the peripheral stalk, linking F(1) to F(0). The polypeptide is ATP synthase subunit b, chloroplastic (Physcomitrium patens (Spreading-leaved earth moss)).